A 519-amino-acid chain; its full sequence is Signal transduction histidine-protein kinase/phosphatase MprB (519 aa).

The Cytoplasmic segment spans residues 1–26; the sequence is MVRFAWRRRASLRATSSLSLRWRVML. The helical transmembrane segment at 27–47 threads the bilayer; sequence LAMSMVAMVVVLMAFAVYVVI. The Extracellular portion of the chain corresponds to 48-163; sequence SAALYSDIDN…PTEAVMTKLR (116 aa). A helical transmembrane segment spans residues 164 to 184; that stretch reads WVLLIVGSLGVAVAAVAGGMV. Topologically, residues 185–519 are cytoplasmic; sequence TRAGLRPVGR…SVDYQSARAR (335 aa). The 53-residue stretch at 186–238 folds into the HAMP domain; sequence RAGLRPVGRLTEAAERVARTDDLRPIPVFGSDELARLTEAFNLMLRALAESRE. The 221-residue stretch at 246–466 folds into the Histidine kinase domain; sequence DAGHELRTPL…SIYVLLPGRP (221 aa). His249 is subject to Phosphohistidine; by autocatalysis.

Mg(2+) is required as a cofactor. The cofactor is Mn(2+). Post-translationally, autophosphorylated.

The protein localises to the cell membrane. The catalysed reaction is ATP + protein L-histidine = ADP + protein N-phospho-L-histidine.. Member of the two-component regulatory system MprB/MprA which contributes to maintaining a balance among several systems involved in stress resistance and is required for establishment and maintenance of persistent infection in the host. In response to environmental signals MprB acts both as a membrane-associated protein kinase that undergoes autophosphorylation and subsequently transfers the phosphate to MprA, and a protein phosphatase that dephosphorylates phospho-MprA. This Mycobacterium leprae (strain TN) protein is Signal transduction histidine-protein kinase/phosphatase MprB (mprB).